The chain runs to 97 residues: UPF0250 protein HD_2015 (97 aa).

Belongs to the UPF0250 family.

In Haemophilus ducreyi (strain 35000HP / ATCC 700724), this protein is UPF0250 protein HD_2015.